A 122-amino-acid chain; its full sequence is Large ribosomal subunit protein uL14 (122 aa).

It belongs to the universal ribosomal protein uL14 family. In terms of assembly, part of the 50S ribosomal subunit. Forms a cluster with proteins L3 and L19. In the 70S ribosome, L14 and L19 interact and together make contacts with the 16S rRNA in bridges B5 and B8.

Binds to 23S rRNA. Forms part of two intersubunit bridges in the 70S ribosome. The sequence is that of Large ribosomal subunit protein uL14 from Alcanivorax borkumensis (strain ATCC 700651 / DSM 11573 / NCIMB 13689 / SK2).